The primary structure comprises 344 residues: Anthranilate phosphoribosyltransferase (344 aa).

Residues glycine 80, 83–84 (GD), threonine 88, 90–93 (NIST), 108–116 (KHGNRSISS), and serine 120 each bind 5-phospho-alpha-D-ribose 1-diphosphate. Glycine 80 is a binding site for anthranilate. Mg(2+) is bound at residue serine 92. An anthranilate-binding site is contributed by asparagine 111. Arginine 166 contacts anthranilate. Residues aspartate 229 and glutamate 230 each contribute to the Mg(2+) site.

This sequence belongs to the anthranilate phosphoribosyltransferase family. In terms of assembly, homodimer. The cofactor is Mg(2+).

It catalyses the reaction N-(5-phospho-beta-D-ribosyl)anthranilate + diphosphate = 5-phospho-alpha-D-ribose 1-diphosphate + anthranilate. The protein operates within amino-acid biosynthesis; L-tryptophan biosynthesis; L-tryptophan from chorismate: step 2/5. Its function is as follows. Catalyzes the transfer of the phosphoribosyl group of 5-phosphorylribose-1-pyrophosphate (PRPP) to anthranilate to yield N-(5'-phosphoribosyl)-anthranilate (PRA). The protein is Anthranilate phosphoribosyltransferase of Chloroherpeton thalassium (strain ATCC 35110 / GB-78).